We begin with the raw amino-acid sequence, 243 residues long: Peptidyl-tRNA hydrolase (243 aa).

Tyr14 serves as a coordination point for tRNA. His19 functions as the Proton acceptor in the catalytic mechanism. Residues Phe64, Asn66, and Asn112 each coordinate tRNA. Residues 190–205 (KAEEEKPAKEMKDAGK) show a composition bias toward basic and acidic residues. The tract at residues 190 to 243 (KAEEEKPAKEMKDAGKKPASQSHIHQARNHNQPKLPATGPMADMLKKMFGKKGD) is disordered. Polar residues predominate over residues 208-221 (ASQSHIHQARNHNQ).

It belongs to the PTH family. As to quaternary structure, monomer.

The protein resides in the cytoplasm. It catalyses the reaction an N-acyl-L-alpha-aminoacyl-tRNA + H2O = an N-acyl-L-amino acid + a tRNA + H(+). Functionally, hydrolyzes ribosome-free peptidyl-tRNAs (with 1 or more amino acids incorporated), which drop off the ribosome during protein synthesis, or as a result of ribosome stalling. Its function is as follows. Catalyzes the release of premature peptidyl moieties from peptidyl-tRNA molecules trapped in stalled 50S ribosomal subunits, and thus maintains levels of free tRNAs and 50S ribosomes. The chain is Peptidyl-tRNA hydrolase from Rhizobium johnstonii (strain DSM 114642 / LMG 32736 / 3841) (Rhizobium leguminosarum bv. viciae).